We begin with the raw amino-acid sequence, 642 residues long: Conserved oligomeric Golgi complex subunit 6 (642 aa).

The protein belongs to the COG6 family. In terms of assembly, component of the conserved oligomeric Golgi complex which is composed of eight different subunits and is required for normal Golgi morphology and localization.

The protein localises to the golgi apparatus membrane. In terms of biological role, required for normal Golgi function. In Caenorhabditis elegans, this protein is Conserved oligomeric Golgi complex subunit 6 (cogc-6).